Consider the following 447-residue polypeptide: DNA primase DnaG (447 aa).

Residues 200 to 274 (DSIIVVEGRA…DIDYVARAPE (75 aa)) enclose the Toprim domain. Positions 206, 248, and 250 each coordinate Mg(2+).

The protein belongs to the archaeal DnaG primase family. As to quaternary structure, forms a ternary complex with MCM helicase and DNA. Component of the archaeal exosome complex. Mg(2+) is required as a cofactor.

The catalysed reaction is ssDNA + n NTP = ssDNA/pppN(pN)n-1 hybrid + (n-1) diphosphate.. In terms of biological role, RNA polymerase that catalyzes the synthesis of short RNA molecules used as primers for DNA polymerase during DNA replication. Also part of the exosome, which is a complex involved in RNA degradation. Acts as a poly(A)-binding protein that enhances the interaction between heteromeric, adenine-rich transcripts and the exosome. This chain is DNA primase DnaG, found in Pyrococcus abyssi (strain GE5 / Orsay).